Here is a 739-residue protein sequence, read N- to C-terminus: Potassium transporter 26 (739 aa).

Residues 1–81 (MEYHHRPHSP…RQVALLSFQS (81 aa)) are Cytoplasmic-facing. The chain crosses the membrane as a helical span at residues 82-102 (LGVVYGDLGTSPLYVFSSISL). At 103–112 (DDPGEADFVG) the chain is on the extracellular side. A helical transmembrane segment spans residues 113–133 (ILSIILWTFTMICLVKYVFIV). Over 134–198 (LKADDHGEGG…KFLEQSTKWQ (65 aa)) the chain is Cytoplasmic. Residues 199-219 (AVITYIVLAGTCMVLGDGALT) form a helical membrane-spanning segment. At 220-236 (PAISVLSAVQGIQSRSS) the chain is on the extracellular side. Residues 237–257 (SITQAHVVLLSVIILFILFFF) form a helical membrane-spanning segment. The Cytoplasmic segment spans residues 258–268 (QKHGTSKVSFT). The chain crosses the membrane as a helical span at residues 269–289 (FSPIMILWFTFVAFIGLYNII). Over 290 to 318 (KHYPPILKAVSPHYIIIYFIRNKRAAWET) the chain is Extracellular. The helical transmembrane segment at 319–339 (LGAIVLCITGAEAMFADLGHF) threads the bilayer. At 340 to 347 (NKSSIQMA) the chain is on the cytoplasmic side. A helical membrane pass occupies residues 348–368 (FSVIVYPSMILAYAGQAAFLV). Over 369–385 (KNPSKLSTTFYSSTPEP) the chain is Extracellular. A helical membrane pass occupies residues 386-406 (LFWPMFIIATLAAIVASQALI). Over 407–437 (SASFSIIRQSIALGCFPRVTMKHTSGKHEGQ) the chain is Cytoplasmic. The helical transmembrane segment at 438 to 458 (VYSPEINYFLMVACILITVGF) threads the bilayer. At 459 to 469 (KGGPEIGQAFG) the chain is on the extracellular side. A helical transmembrane segment spans residues 470 to 490 (VAVIFVMLFTTNLMTVVMLII). Residues 491–494 (WESN) lie on the Cytoplasmic side of the membrane. Residues 495–515 (IALASLFFVFFFSIEGIYMTS) traverse the membrane as a helical segment. The Extracellular portion of the chain corresponds to 516 to 519 (LMNK). Residues 520–540 (ILQGGWVPFAITAFFLIITLS) traverse the membrane as a helical segment. Residues 541 to 739 (WTYGRSKKGE…TLQVGMLYEI (199 aa)) lie on the Cytoplasmic side of the membrane.

Belongs to the HAK/KUP transporter (TC 2.A.72.3) family.

It is found in the membrane. Functionally, high-affinity potassium transporter. This is Potassium transporter 26 (HAK26) from Oryza sativa subsp. japonica (Rice).